A 342-amino-acid chain; its full sequence is Phosphoribosylformylglycinamidine cyclo-ligase (342 aa).

This sequence belongs to the AIR synthase family.

The protein localises to the cytoplasm. The enzyme catalyses 2-formamido-N(1)-(5-O-phospho-beta-D-ribosyl)acetamidine + ATP = 5-amino-1-(5-phospho-beta-D-ribosyl)imidazole + ADP + phosphate + H(+). It functions in the pathway purine metabolism; IMP biosynthesis via de novo pathway; 5-amino-1-(5-phospho-D-ribosyl)imidazole from N(2)-formyl-N(1)-(5-phospho-D-ribosyl)glycinamide: step 2/2. The polypeptide is Phosphoribosylformylglycinamidine cyclo-ligase (Staphylococcus aureus (strain MSSA476)).